A 520-amino-acid chain; its full sequence is Pleckstrin homology domain-containing family O member 1-A (520 aa).

Disordered stretches follow at residues 1 to 23 (MKKS…QPDK), 208 to 296 (SLDK…GHLQ), 313 to 439 (IQEQ…KSTD), and 497 to 520 (QARQ…QKSP). Residues 20-131 (QPDKVGWIRR…WINVLNTAIT (112 aa)) form the PH domain. Polar residues predominate over residues 227-241 (PASNTEAQEKTSSLP). 2 stretches are compositionally biased toward basic and acidic residues: residues 242 to 255 (RKSE…DHPR) and 333 to 347 (DSPR…DSPH). Low complexity predominate over residues 348-361 (SKGSSSPHSANSPS). 2 stretches are compositionally biased toward basic and acidic residues: residues 363-385 (RAKD…DSPR) and 396-418 (KSID…DLTH). The span at 420–439 (KGSQSPLSTGSNSPHMKSTD) shows a compositional bias: polar residues. Residues 497-506 (QARQRREELS) are compositionally biased toward basic and acidic residues. The segment covering 509–520 (GMASQKLQQKSP) has biased composition (polar residues).

C-terminal fragments could be released during apoptosis via caspase-3-dependent cleavage.

It localises to the membrane. It is found in the nucleus. The protein localises to the cytoplasm. Its function is as follows. Plays a role in the regulation of the actin cytoskeleton through its interactions with actin capping protein (CP). The polypeptide is Pleckstrin homology domain-containing family O member 1-A (plekho1a) (Danio rerio (Zebrafish)).